The following is a 388-amino-acid chain: Alcohol dehydrogenase patD (388 aa).

Cysteine 46 lines the Zn(2+) pocket. Histidine 47 contacts NAD(+). Zn(2+) contacts are provided by histidine 67, glutamate 68, cysteine 101, cysteine 104, and cysteine 112. Histidine 67 serves as a coordination point for substrate. Residues 198-203 (VALSRG), 295-297 (SLL), and 320-322 (EEA) contribute to the NAD(+) site.

This sequence belongs to the zinc-containing alcohol dehydrogenase family. Requires Zn(2+) as cofactor.

Its subcellular location is the cytoplasm. It is found in the cytosol. The enzyme catalyses neopatulin + NADPH + H(+) = (E)-ascladiol + NADP(+). Its pathway is mycotoxin biosynthesis; patulin biosynthesis. Its function is as follows. Alcohol dehydrogenase; part of the gene cluster that mediates the biosynthesis of patulin, an acetate-derived tetraketide mycotoxin produced by several fungal species that shows antimicrobial properties against several bacteria. PatD catalyzes the conversion of neopatulin into E-ascladiol. The pathway begins with the synthesis of 6-methylsalicylic acid by the polyketide synthase (PKS) patK via condensation of acetate and malonate units. The 6-methylsalicylic acid decarboxylase patG then catalyzes the decarboxylation of 6-methylsalicylic acid to yield m-cresol (also known as 3-methylphenol). These first reactions occur in the cytosol. The intermediate m-cresol is then transported into the endoplasmic reticulum where the cytochrome P450 monooxygenase patH converts it to m-hydroxybenzyl alcohol, which is further converted to gentisyl alcohol by the cytochrome P450 monooxygenase patI. The oxidoreductases patJ and patO further convert gentisyl alcohol to isoepoxydon in the vacuole. PatN catalyzes then the transformation of isoepoxydon into phyllostine. The cluster protein patF is responsible for the conversion from phyllostine to neopatulin whereas the alcohol dehydrogenase patD converts neopatulin to E-ascladiol. The steps between isoepoxydon and E-ascladiol occur in the cytosol, and E-ascladiol is probably secreted to the extracellular space by one of the cluster-specific transporters patC or patM. Finally, the secreted patulin synthase patE catalyzes the conversion of E-ascladiol to patulin. This chain is Alcohol dehydrogenase patD, found in Aspergillus clavatus (strain ATCC 1007 / CBS 513.65 / DSM 816 / NCTC 3887 / NRRL 1 / QM 1276 / 107).